Reading from the N-terminus, the 209-residue chain is Orotate phosphoribosyltransferase (209 aa).

Residues Arg96, Lys100, His102, and 122 to 130 (EDLISTGGS) each bind 5-phospho-alpha-D-ribose 1-diphosphate. Residue Ser126 participates in orotate binding.

Belongs to the purine/pyrimidine phosphoribosyltransferase family. PyrE subfamily. Homodimer. Mg(2+) is required as a cofactor.

The catalysed reaction is orotidine 5'-phosphate + diphosphate = orotate + 5-phospho-alpha-D-ribose 1-diphosphate. It functions in the pathway pyrimidine metabolism; UMP biosynthesis via de novo pathway; UMP from orotate: step 1/2. Catalyzes the transfer of a ribosyl phosphate group from 5-phosphoribose 1-diphosphate to orotate, leading to the formation of orotidine monophosphate (OMP). This Lactococcus lactis subsp. cremoris (strain MG1363) protein is Orotate phosphoribosyltransferase.